The sequence spans 955 residues: RNA polymerase-associated protein RapA (955 aa).

In terms of domain architecture, Helicase ATP-binding spans 163–333 (EVGHRYAPRV…FARLRLLDPE (171 aa)). 176-183 (DEVGLGKT) lines the ATP pocket. Positions 279–282 (DEAH) match the DEAH box motif. The 165-residue stretch at 478 to 642 (RVDWLLELLL…AVRDELFELL (165 aa)) folds into the Helicase C-terminal domain.

The protein belongs to the SNF2/RAD54 helicase family. RapA subfamily. As to quaternary structure, interacts with the RNAP. Has a higher affinity for the core RNAP than for the holoenzyme. Its ATPase activity is stimulated by binding to RNAP.

In terms of biological role, transcription regulator that activates transcription by stimulating RNA polymerase (RNAP) recycling in case of stress conditions such as supercoiled DNA or high salt concentrations. Probably acts by releasing the RNAP, when it is trapped or immobilized on tightly supercoiled DNA. Does not activate transcription on linear DNA. Probably not involved in DNA repair. This is RNA polymerase-associated protein RapA from Aeromonas salmonicida (strain A449).